The primary structure comprises 99 residues: Plastocyanin (99 aa).

The Plastocyanin-like domain maps to 1–99 (AEVLLGSSDG…AGMVGKVTVN (99 aa)). Cu cation-binding residues include H37, C84, H87, and M92.

The protein belongs to the plastocyanin family. Requires Cu(2+) as cofactor.

The protein resides in the plastid. It localises to the chloroplast thylakoid membrane. Participates in electron transfer between P700 and the cytochrome b6-f complex in photosystem I. This is Plastocyanin (PETE) from Lactuca sativa (Garden lettuce).